Here is a 730-residue protein sequence, read N- to C-terminus: LisH domain-containing protein ARMC9 (730 aa).

One can recognise a LisH domain in the interval H7 to G39. Residues S205–L242 adopt a coiled-coil conformation. S583 is subject to Phosphoserine. The segment at Q675–K730 is disordered.

In terms of assembly, interacts with TOGARAM1, CCDC66, CEP104, CSPP1 and CEP290. Interacts with NDUFAF2.

It is found in the cytoplasm. The protein resides in the cytoskeleton. Its subcellular location is the cilium basal body. It localises to the cell projection. The protein localises to the cilium. It is found in the microtubule organizing center. The protein resides in the centrosome. Its subcellular location is the centriole. In terms of biological role, involved in ciliogenesis. It is required for appropriate acetylation and polyglutamylation of ciliary microtubules, and regulation of cilium length. Acts as a positive regulator of hedgehog (Hh)signaling. May participate in the trafficking and/or retention of GLI2 and GLI3 proteins at the ciliary tip. This is LisH domain-containing protein ARMC9 (Armc9) from Rattus norvegicus (Rat).